The following is a 186-amino-acid chain: ATP synthase subunit delta (186 aa).

Belongs to the ATPase delta chain family. As to quaternary structure, F-type ATPases have 2 components, F(1) - the catalytic core - and F(0) - the membrane proton channel. F(1) has five subunits: alpha(3), beta(3), gamma(1), delta(1), epsilon(1). F(0) has three main subunits: a(1), b(2) and c(10-14). The alpha and beta chains form an alternating ring which encloses part of the gamma chain. F(1) is attached to F(0) by a central stalk formed by the gamma and epsilon chains, while a peripheral stalk is formed by the delta and b chains.

It localises to the cell inner membrane. Functionally, f(1)F(0) ATP synthase produces ATP from ADP in the presence of a proton or sodium gradient. F-type ATPases consist of two structural domains, F(1) containing the extramembraneous catalytic core and F(0) containing the membrane proton channel, linked together by a central stalk and a peripheral stalk. During catalysis, ATP synthesis in the catalytic domain of F(1) is coupled via a rotary mechanism of the central stalk subunits to proton translocation. This protein is part of the stalk that links CF(0) to CF(1). It either transmits conformational changes from CF(0) to CF(1) or is implicated in proton conduction. This is ATP synthase subunit delta from Brucella canis (strain ATCC 23365 / NCTC 10854 / RM-666).